A 967-amino-acid polypeptide reads, in one-letter code: Alanine--tRNA ligase, cytoplasmic (967 aa).

4 residues coordinate Zn(2+): H605, H609, C724, and H728.

Belongs to the class-II aminoacyl-tRNA synthetase family. As to quaternary structure, monomer. The cofactor is Zn(2+). The N-terminus is blocked.

Its subcellular location is the cytoplasm. The enzyme catalyses tRNA(Ala) + L-alanine + ATP = L-alanyl-tRNA(Ala) + AMP + diphosphate. Functionally, catalyzes the attachment of alanine to tRNA(Ala) in a two-step reaction: alanine is first activated by ATP to form Ala-AMP and then transferred to the acceptor end of tRNA(Ala). Also edits incorrectly charged tRNA(Ala) via its editing domain. In Bombyx mori (Silk moth), this protein is Alanine--tRNA ligase, cytoplasmic.